The chain runs to 98 residues: NADH-ubiquinone oxidoreductase chain 4L (98 aa).

A run of 3 helical transmembrane segments spans residues 2 to 22 (PSIS…MLVF), 29 to 49 (SLLC…LTIM), and 61 to 81 (ILLL…LVMM).

It belongs to the complex I subunit 4L family. In terms of assembly, core subunit of respiratory chain NADH dehydrogenase (Complex I) which is composed of 45 different subunits.

The protein localises to the mitochondrion inner membrane. The enzyme catalyses a ubiquinone + NADH + 5 H(+)(in) = a ubiquinol + NAD(+) + 4 H(+)(out). Its function is as follows. Core subunit of the mitochondrial membrane respiratory chain NADH dehydrogenase (Complex I) which catalyzes electron transfer from NADH through the respiratory chain, using ubiquinone as an electron acceptor. Part of the enzyme membrane arm which is embedded in the lipid bilayer and involved in proton translocation. The sequence is that of NADH-ubiquinone oxidoreductase chain 4L (MT-ND4L) from Lepilemur seali (Seal's sportive lemur).